Consider the following 102-residue polypeptide: Omega-hexatoxin-Hi2b (102 aa).

A signal peptide spans 1-23 (MKFSKLSLTLALILTQAIFVLCG). Positions 24-56 (KINEDFMENGLESHALHDEIRKPIDTEKADAER) are excised as a propeptide. 3 disulfide bridges follow: Cys-61–Cys-75, Cys-68–Cys-81, and Cys-74–Cys-86. Leucine amide is present on Leu-98. Residues 100–102 (RAL) constitute a propeptide that is removed on maturation.

The protein belongs to the neurotoxin 15 family. 02 (omega-actx) subfamily. In terms of tissue distribution, expressed by the venom gland.

It is found in the secreted. Potent inhibitor of insect, but not mammalian, voltage-gated calcium channels (Cav). This chain is Omega-hexatoxin-Hi2b, found in Hadronyche infensa (Fraser island funnel-web spider).